A 115-amino-acid chain; its full sequence is NAD(P)H-quinone oxidoreductase subunit M (115 aa).

It belongs to the complex I NdhM subunit family. As to quaternary structure, NDH-1 can be composed of about 15 different subunits; different subcomplexes with different compositions have been identified which probably have different functions.

Its subcellular location is the cellular thylakoid membrane. The enzyme catalyses a plastoquinone + NADH + (n+1) H(+)(in) = a plastoquinol + NAD(+) + n H(+)(out). It carries out the reaction a plastoquinone + NADPH + (n+1) H(+)(in) = a plastoquinol + NADP(+) + n H(+)(out). Its function is as follows. NDH-1 shuttles electrons from an unknown electron donor, via FMN and iron-sulfur (Fe-S) centers, to quinones in the respiratory and/or the photosynthetic chain. The immediate electron acceptor for the enzyme in this species is believed to be plastoquinone. Couples the redox reaction to proton translocation, and thus conserves the redox energy in a proton gradient. Cyanobacterial NDH-1 also plays a role in inorganic carbon-concentration. This Prochlorococcus marinus (strain MIT 9303) protein is NAD(P)H-quinone oxidoreductase subunit M.